The chain runs to 323 residues: tRNA U34 carboxymethyltransferase (323 aa).

Residues K91, W105, K110, G130, 152–154 (DPS), 181–182 (IE), M196, Y200, and R315 each bind carboxy-S-adenosyl-L-methionine.

This sequence belongs to the class I-like SAM-binding methyltransferase superfamily. CmoB family. As to quaternary structure, homotetramer.

It carries out the reaction carboxy-S-adenosyl-L-methionine + 5-hydroxyuridine(34) in tRNA = 5-carboxymethoxyuridine(34) in tRNA + S-adenosyl-L-homocysteine + H(+). In terms of biological role, catalyzes carboxymethyl transfer from carboxy-S-adenosyl-L-methionine (Cx-SAM) to 5-hydroxyuridine (ho5U) to form 5-carboxymethoxyuridine (cmo5U) at position 34 in tRNAs. In Vibrio vulnificus (strain CMCP6), this protein is tRNA U34 carboxymethyltransferase.